Consider the following 179-residue polypeptide: Sec-independent protein translocase protein TatB (179 aa).

Residues 1–21 traverse the membrane as a helical segment; it reads MFDLGFWEVLIIMLIGLLILG. Composition is skewed to basic and acidic residues over residues 75 to 86 and 94 to 106; these read KDVEKNARRFEA and TFRDVGRQADDAA. The disordered stretch occupies residues 75–179; the sequence is KDVEKNARRF…QGGGGEEKRQ (105 aa).

This sequence belongs to the TatB family. The Tat system comprises two distinct complexes: a TatABC complex, containing multiple copies of TatA, TatB and TatC subunits, and a separate TatA complex, containing only TatA subunits. Substrates initially bind to the TatABC complex, which probably triggers association of the separate TatA complex to form the active translocon.

Its subcellular location is the cell inner membrane. Its function is as follows. Part of the twin-arginine translocation (Tat) system that transports large folded proteins containing a characteristic twin-arginine motif in their signal peptide across membranes. Together with TatC, TatB is part of a receptor directly interacting with Tat signal peptides. TatB may form an oligomeric binding site that transiently accommodates folded Tat precursor proteins before their translocation. This is Sec-independent protein translocase protein TatB from Alkalilimnicola ehrlichii (strain ATCC BAA-1101 / DSM 17681 / MLHE-1).